A 325-amino-acid polypeptide reads, in one-letter code: Tetraacyldisaccharide 4'-kinase (325 aa).

Residue 55 to 62 (TAGGNGKT) participates in ATP binding.

This sequence belongs to the LpxK family.

The catalysed reaction is a lipid A disaccharide + ATP = a lipid IVA + ADP + H(+). The protein operates within glycolipid biosynthesis; lipid IV(A) biosynthesis; lipid IV(A) from (3R)-3-hydroxytetradecanoyl-[acyl-carrier-protein] and UDP-N-acetyl-alpha-D-glucosamine: step 6/6. Its function is as follows. Transfers the gamma-phosphate of ATP to the 4'-position of a tetraacyldisaccharide 1-phosphate intermediate (termed DS-1-P) to form tetraacyldisaccharide 1,4'-bis-phosphate (lipid IVA). This is Tetraacyldisaccharide 4'-kinase from Enterobacter sp. (strain 638).